The sequence spans 482 residues: Adenylyltransferase and sulfurtransferase MOCS3-2 (482 aa).

ATP contacts are provided by residues Gly-125, Asp-146, Asn-153–Arg-157, Lys-170, and Asp-214–Asn-215. Residues Cys-255 and Cys-258 each contribute to the Zn(2+) site. The active-site Glycyl thioester intermediate; for adenylyltransferase activity is the Cys-272. Zn(2+) contacts are provided by Cys-330 and Cys-333. The 96-residue stretch at Asp-385–Pro-480 folds into the Rhodanese domain. Cys-440 acts as the Cysteine persulfide intermediate; for sulfurtransferase activity in catalysis.

The protein in the N-terminal section; belongs to the HesA/MoeB/ThiF family. UBA4 subfamily. The cofactor is Zn(2+).

Its subcellular location is the cytoplasm. It carries out the reaction [molybdopterin-synthase sulfur-carrier protein]-C-terminal Gly-Gly + ATP + H(+) = [molybdopterin-synthase sulfur-carrier protein]-C-terminal Gly-Gly-AMP + diphosphate. It catalyses the reaction [molybdopterin-synthase sulfur-carrier protein]-C-terminal Gly-Gly-AMP + S-sulfanyl-L-cysteinyl-[cysteine desulfurase] + AH2 = [molybdopterin-synthase sulfur-carrier protein]-C-terminal-Gly-aminoethanethioate + L-cysteinyl-[cysteine desulfurase] + A + AMP + 2 H(+). It functions in the pathway tRNA modification; 5-methoxycarbonylmethyl-2-thiouridine-tRNA biosynthesis. It participates in cofactor biosynthesis; molybdopterin biosynthesis. In terms of biological role, plays a central role in 2-thiolation of mcm(5)S(2)U at tRNA wobble positions of cytosolic tRNA(Lys), tRNA(Glu) and tRNA(Gln). Also essential during biosynthesis of the molybdenum cofactor. Acts by mediating the C-terminal thiocarboxylation of sulfur carriers URM1 and MOCS2A. Its N-terminus first activates URM1 and MOCS2A as acyl-adenylates (-COAMP), then the persulfide sulfur on the catalytic cysteine is transferred to URM1 and MOCS2A to form thiocarboxylation (-COSH) of their C-terminus. The reaction probably involves hydrogen sulfide that is generated from the persulfide intermediate and that acts as a nucleophile towards URM1 and MOCS2A. Subsequently, a transient disulfide bond is formed. Does not use thiosulfate as sulfur donor; NFS1 probably acting as a sulfur donor for thiocarboxylation reactions. This is Adenylyltransferase and sulfurtransferase MOCS3-2 from Zea mays (Maize).